The following is a 404-amino-acid chain: cAMP-dependent protein kinase regulatory subunit (404 aa).

Residues 14–144 form a dimerization and phosphorylation region; that stretch reads LTDHELLRIP…RLKTAIAGNF (131 aa). S105 carries the phosphoserine modification. 3',5'-cyclic AMP is bound by residues 145-276, E223, R232, 277-398, E344, and R353; these read LFSH…EKFP and CCRH…GVEE.

This sequence belongs to the cAMP-dependent kinase regulatory chain family. In terms of assembly, tetramer, composed of 2 regulatory (R) and 2 catalytic (C) subunits. In the presence of cAMP it dissociates into 2 active monomeric C subunits and an R dimer.

In terms of biological role, cAMP-dependent protein kinase PKA regulatory subunit. This is cAMP-dependent protein kinase regulatory subunit (PKAR) from Colletotrichum trifolii.